A 146-amino-acid polypeptide reads, in one-letter code: Hemoglobin subunit beta-1 (146 aa).

The Globin domain maps to 2–146; sequence GLTAHDRQLI…IADALGKGYH (145 aa). The heme b site is built by H63 and H92.

This sequence belongs to the globin family. Heterotetramer of two alpha chains and two beta chains. As to expression, red blood cells.

Involved in oxygen transport from the lung to the various peripheral tissues. This chain is Hemoglobin subunit beta-1 (hbb1), found in Xenopus laevis (African clawed frog).